Reading from the N-terminus, the 141-residue chain is Putative phosphatidylglycerol/phosphatidylinositol transfer protein DDB_G0278295 (141 aa).

A signal peptide spans 1-19 (MRLLLALFFVLALVSPSFT). Asn-82 and Asn-104 each carry an N-linked (GlcNAc...) asparagine glycan.

This sequence belongs to the NPC2 family. Monomer.

Its function is as follows. Catalyzes the intermembrane transfer of phosphatidylglycerol and phosphatidylinositol. In Dictyostelium discoideum (Social amoeba), this protein is Putative phosphatidylglycerol/phosphatidylinositol transfer protein DDB_G0278295.